The primary structure comprises 209 residues: Ribosomal RNA large subunit methyltransferase E (209 aa).

S-adenosyl-L-methionine contacts are provided by Gly-63, Trp-65, Asp-83, Asp-99, and Asp-124. The active-site Proton acceptor is the Lys-164.

It belongs to the class I-like SAM-binding methyltransferase superfamily. RNA methyltransferase RlmE family.

It is found in the cytoplasm. The enzyme catalyses uridine(2552) in 23S rRNA + S-adenosyl-L-methionine = 2'-O-methyluridine(2552) in 23S rRNA + S-adenosyl-L-homocysteine + H(+). Functionally, specifically methylates the uridine in position 2552 of 23S rRNA at the 2'-O position of the ribose in the fully assembled 50S ribosomal subunit. This is Ribosomal RNA large subunit methyltransferase E from Sodalis glossinidius (strain morsitans).